The sequence spans 114 residues: Histone H3-5 (114 aa).

Residues 1 to 29 (NTGAKAPRKQLANKAARKSTNVNAVSGVK) are disordered.

This sequence belongs to the histone H3 family. As to quaternary structure, the nucleosome is a histone octamer containing two molecules each of H2A, H2B, H3 and H4 assembled in one H3-H4 heterotetramer and two H2A-H2B heterodimers. The octamer wraps approximately 147 bp of DNA.

The protein localises to the nucleus. It is found in the chromosome. Core component of nucleosome. Nucleosomes wrap and compact DNA into chromatin, limiting DNA accessibility to the cellular machineries which require DNA as a template. Histones thereby play a central role in transcription regulation, DNA repair, DNA replication and chromosomal stability. DNA accessibility is regulated via a complex set of post-translational modifications of histones, also called histone code, and nucleosome remodeling. This chain is Histone H3-5 (H3-5), found in Stylonychia lemnae (Ciliate).